The following is a 236-amino-acid chain: 2,3,4,5-tetrahydropyridine-2,6-dicarboxylate N-acetyltransferase (236 aa).

The protein belongs to the transferase hexapeptide repeat family. DapH subfamily.

The catalysed reaction is (S)-2,3,4,5-tetrahydrodipicolinate + acetyl-CoA + H2O = L-2-acetamido-6-oxoheptanedioate + CoA. The protein operates within amino-acid biosynthesis; L-lysine biosynthesis via DAP pathway; LL-2,6-diaminopimelate from (S)-tetrahydrodipicolinate (acetylase route): step 1/3. Its function is as follows. Catalyzes the transfer of an acetyl group from acetyl-CoA to tetrahydrodipicolinate. In Listeria innocua serovar 6a (strain ATCC BAA-680 / CLIP 11262), this protein is 2,3,4,5-tetrahydropyridine-2,6-dicarboxylate N-acetyltransferase.